The sequence spans 1387 residues: DNA-directed RNA polymerase subunit beta'' (1387 aa).

Residues Cys-224, Cys-295, Cys-302, and Cys-305 each coordinate Zn(2+). The disordered stretch occupies residues 883–903 (SHTGKRNDPAGSGLIPDNGSD).

It belongs to the RNA polymerase beta' chain family. RpoC2 subfamily. In terms of assembly, in plastids the minimal PEP RNA polymerase catalytic core is composed of four subunits: alpha, beta, beta', and beta''. When a (nuclear-encoded) sigma factor is associated with the core the holoenzyme is formed, which can initiate transcription. Zn(2+) serves as cofactor.

Its subcellular location is the plastid. It is found in the chloroplast. It catalyses the reaction RNA(n) + a ribonucleoside 5'-triphosphate = RNA(n+1) + diphosphate. DNA-dependent RNA polymerase catalyzes the transcription of DNA into RNA using the four ribonucleoside triphosphates as substrates. In Platanus occidentalis (Sycamore), this protein is DNA-directed RNA polymerase subunit beta''.